A 156-amino-acid polypeptide reads, in one-letter code: Small ribosomal subunit protein uS7 (156 aa).

Belongs to the universal ribosomal protein uS7 family. As to quaternary structure, part of the 30S ribosomal subunit. Contacts proteins S9 and S11.

One of the primary rRNA binding proteins, it binds directly to 16S rRNA where it nucleates assembly of the head domain of the 30S subunit. Is located at the subunit interface close to the decoding center, probably blocks exit of the E-site tRNA. This is Small ribosomal subunit protein uS7 from Methylobacterium nodulans (strain LMG 21967 / CNCM I-2342 / ORS 2060).